Reading from the N-terminus, the 188-residue chain is Elongation factor P (188 aa).

Residue Lys34 is modified to N6-(3,6-diaminohexanoyl)-5-hydroxylysine.

This sequence belongs to the elongation factor P family. May be beta-lysylated on the epsilon-amino group of Lys-34 by the combined action of EpmA and EpmB, and then hydroxylated on the C5 position of the same residue by EpmC (if this protein is present). Lysylation is critical for the stimulatory effect of EF-P on peptide-bond formation. The lysylation moiety may extend toward the peptidyltransferase center and stabilize the terminal 3-CCA end of the tRNA. Hydroxylation of the C5 position on Lys-34 may allow additional potential stabilizing hydrogen-bond interactions with the P-tRNA.

It localises to the cytoplasm. It participates in protein biosynthesis; polypeptide chain elongation. Its function is as follows. Involved in peptide bond synthesis. Alleviates ribosome stalling that occurs when 3 or more consecutive Pro residues or the sequence PPG is present in a protein, possibly by augmenting the peptidyl transferase activity of the ribosome. Modification of Lys-34 is required for alleviation. The protein is Elongation factor P of Actinobacillus pleuropneumoniae serotype 5b (strain L20).